The primary structure comprises 560 residues: Cytosolic purine 5'-nucleotidase (560 aa).

Asp-52 acts as the Nucleophile in catalysis. Asp-52 and Asp-54 together coordinate IMP. Mg(2+)-binding residues include Asp-52 and Asp-54. Asp-54 acts as the Proton donor in catalysis. ATP is bound by residues Arg-144 and Asn-154. IMP contacts are provided by Arg-202, Asp-206, Lys-215, Thr-249, Asn-250, Ser-251, and Lys-292. Asp-351 is a binding site for Mg(2+). Ser-418 is subject to Phosphoserine. ATP is bound by residues Gln-453 and Arg-456. Ser-502, Ser-511, and Ser-527 each carry phosphoserine. Positions 541–560 are disordered; sequence PQEITHCHDEDDDEEEEEEE. Residues 548-560 are required for tetramer assembly; it reads HDEDDDEEEEEEE. Residues 550-560 are compositionally biased toward acidic residues; that stretch reads EDDDEEEEEEE.

The protein belongs to the 5'(3')-deoxyribonucleotidase family. As to quaternary structure, homotetramer. It depends on Mg(2+) as a cofactor.

It is found in the cytoplasm. It localises to the cytosol. The catalysed reaction is a ribonucleoside 5'-phosphate + H2O = a ribonucleoside + phosphate. The enzyme catalyses a 2'-deoxyribonucleoside + a ribonucleoside 5'-phosphate = a ribonucleoside + a 2'-deoxyribonucleoside 5'-phosphate. It carries out the reaction IMP + H2O = inosine + phosphate. It catalyses the reaction GMP + H2O = guanosine + phosphate. The catalysed reaction is dGMP + H2O = 2'-deoxyguanosine + phosphate. The enzyme catalyses dIMP + H2O = 2'-deoxyinosine + phosphate. It carries out the reaction XMP + H2O = xanthosine + phosphate. It catalyses the reaction inosine + GMP = guanosine + IMP. The catalysed reaction is dGMP + inosine = 2'-deoxyguanosine + IMP. The enzyme catalyses dIMP + inosine = 2'-deoxyinosine + IMP. It carries out the reaction inosine + UMP = uridine + IMP. It catalyses the reaction inosine + CMP = cytidine + IMP. The catalysed reaction is inosine + AMP = IMP + adenosine. Its activity is regulated as follows. Allosterically activated by various compounds including ATP, 2,3-BPG/2,3-Bisphosphoglyceric acid and Ap4A/P1,P4-bis(5'-adenosyl) tetraphosphate. Binding of an allosteric activator is a prerequisiste to magnesium and substrate binding. Inhibited by inorganic phosphate. Broad specificity cytosolic 5'-nucleotidase that catalyzes the dephosphorylation of 6-hydroxypurine nucleoside 5'-monophosphates. In addition, possesses a phosphotransferase activity by which it can transfer a phosphate from a donor nucleoside monophosphate to an acceptor nucleoside, preferably inosine, deoxyinosine and guanosine. Has the highest activities for IMP and GMP followed by dIMP, dGMP and XMP. Could also catalyze the transfer of phosphates from pyrimidine monophosphates but with lower efficiency. Through these activities regulates the purine nucleoside/nucleotide pools within the cell. This chain is Cytosolic purine 5'-nucleotidase, found in Mus musculus (Mouse).